A 199-amino-acid polypeptide reads, in one-letter code: NADH-quinone oxidoreductase subunit C (199 aa).

This sequence belongs to the complex I 30 kDa subunit family. In terms of assembly, NDH-1 is composed of 14 different subunits. Subunits NuoB, C, D, E, F, and G constitute the peripheral sector of the complex.

The protein resides in the cell inner membrane. It carries out the reaction a quinone + NADH + 5 H(+)(in) = a quinol + NAD(+) + 4 H(+)(out). NDH-1 shuttles electrons from NADH, via FMN and iron-sulfur (Fe-S) centers, to quinones in the respiratory chain. The immediate electron acceptor for the enzyme in this species is believed to be ubiquinone. Couples the redox reaction to proton translocation (for every two electrons transferred, four hydrogen ions are translocated across the cytoplasmic membrane), and thus conserves the redox energy in a proton gradient. The chain is NADH-quinone oxidoreductase subunit C from Cupriavidus metallidurans (strain ATCC 43123 / DSM 2839 / NBRC 102507 / CH34) (Ralstonia metallidurans).